Here is a 320-residue protein sequence, read N- to C-terminus: Mitochondrial glutamate carrier 2 (320 aa).

3 Solcar repeats span residues 11–97 (LSIT…LRQL), 105–215 (RNLK…LNQL), and 224–313 (ASFT…GIGE). The next 3 membrane-spanning stretches (helical) occupy residues 17 to 37 (LING…IDLA), 66 to 86 (FLGM…EKAI), and 111 to 131 (MLAG…MEML). Ser150 bears the Phosphoserine mark. Transmembrane regions (helical) follow at residues 190–210 (GLGA…PLFA), 230–250 (FVAG…LDVL), and 293–313 (ALVI…GIGE).

Belongs to the mitochondrial carrier (TC 2.A.29) family.

Its subcellular location is the mitochondrion inner membrane. The enzyme catalyses L-glutamate(in) + H(+)(in) = L-glutamate(out) + H(+)(out). Responsible for the transport of glutamate from the cytosol into the mitochondrial matrix with the concomitant import of a proton (symport system). The polypeptide is Mitochondrial glutamate carrier 2 (Slc25a18) (Rattus norvegicus (Rat)).